The primary structure comprises 660 residues: Bifunctional polymyxin resistance protein ArnA (660 aa).

The tract at residues 1 to 304 is formyltransferase ArnAFT; it reads MKAIVFAYHD…DMSMVTDVRV (304 aa). Catalysis depends on His104, which acts as the Proton donor; for formyltransferase activity. (6R)-10-formyltetrahydrofolate contacts are provided by residues Arg114 and 136–140; that span reads VLKPD. The dehydrogenase ArnADH stretch occupies residues 314-660; that stretch reads HRKRVLILGV…RGAVEELGKN (347 aa). NAD(+)-binding positions include Asp347 and 368–369; that span reads DI. Residues Ala393, Tyr398, and 432 to 433 each bind UDP-alpha-D-glucuronate; that span reads TS. Catalysis depends on Glu434, which acts as the Proton acceptor; for decarboxylase activity. UDP-alpha-D-glucuronate contacts are provided by residues Arg460, Asn492, 526–535, and Tyr613; that span reads KLVDGGEQKR. The Proton donor; for decarboxylase activity role is filled by Arg619.

This sequence in the N-terminal section; belongs to the Fmt family. UDP-L-Ara4N formyltransferase subfamily. In the C-terminal section; belongs to the NAD(P)-dependent epimerase/dehydratase family. UDP-glucuronic acid decarboxylase subfamily. Homohexamer, formed by a dimer of trimers.

The enzyme catalyses UDP-alpha-D-glucuronate + NAD(+) = UDP-beta-L-threo-pentopyranos-4-ulose + CO2 + NADH. The catalysed reaction is UDP-4-amino-4-deoxy-beta-L-arabinose + (6R)-10-formyltetrahydrofolate = UDP-4-deoxy-4-formamido-beta-L-arabinose + (6S)-5,6,7,8-tetrahydrofolate + H(+). It functions in the pathway nucleotide-sugar biosynthesis; UDP-4-deoxy-4-formamido-beta-L-arabinose biosynthesis; UDP-4-deoxy-4-formamido-beta-L-arabinose from UDP-alpha-D-glucuronate: step 1/3. It participates in nucleotide-sugar biosynthesis; UDP-4-deoxy-4-formamido-beta-L-arabinose biosynthesis; UDP-4-deoxy-4-formamido-beta-L-arabinose from UDP-alpha-D-glucuronate: step 3/3. The protein operates within bacterial outer membrane biogenesis; lipopolysaccharide biosynthesis. Its function is as follows. Bifunctional enzyme that catalyzes the oxidative decarboxylation of UDP-glucuronic acid (UDP-GlcUA) to UDP-4-keto-arabinose (UDP-Ara4O) and the addition of a formyl group to UDP-4-amino-4-deoxy-L-arabinose (UDP-L-Ara4N) to form UDP-L-4-formamido-arabinose (UDP-L-Ara4FN). The modified arabinose is attached to lipid A and is required for resistance to polymyxin and cationic antimicrobial peptides. This Photorhabdus laumondii subsp. laumondii (strain DSM 15139 / CIP 105565 / TT01) (Photorhabdus luminescens subsp. laumondii) protein is Bifunctional polymyxin resistance protein ArnA.